The sequence spans 653 residues: Mediator of RNA polymerase II transcription subunit 17 (653 aa).

A disordered region spans residues 246–271 (SNESDEHIDSTTGHDIPGTSEKLSAS).

Belongs to the Mediator complex subunit 17 family. Component of the Mediator complex.

The protein resides in the nucleus. In terms of biological role, component of the Mediator complex, a coactivator involved in the regulated transcription of nearly all RNA polymerase II-dependent genes. Mediator functions as a bridge to convey information from gene-specific regulatory proteins to the basal RNA polymerase II transcription machinery. The Mediator complex, having a compact conformation in its free form, is recruited to promoters by direct interactions with regulatory proteins and serves for the assembly of a functional preinitiation complex with RNA polymerase II and the general transcription factors. The polypeptide is Mediator of RNA polymerase II transcription subunit 17 (MED17) (Arabidopsis thaliana (Mouse-ear cress)).